Here is a 614-residue protein sequence, read N- to C-terminus: tRNA uridine 5-carboxymethylaminomethyl modification enzyme MnmG (614 aa).

Residue 10-15 (GAGHAG) participates in FAD binding. 271 to 285 (GPRYCPSIEDKIVKF) contacts NAD(+).

Belongs to the MnmG family. In terms of assembly, homodimer. Heterotetramer of two MnmE and two MnmG subunits. Requires FAD as cofactor.

It localises to the cytoplasm. In terms of biological role, NAD-binding protein involved in the addition of a carboxymethylaminomethyl (cmnm) group at the wobble position (U34) of certain tRNAs, forming tRNA-cmnm(5)s(2)U34. The polypeptide is tRNA uridine 5-carboxymethylaminomethyl modification enzyme MnmG (Ureaplasma urealyticum serovar 10 (strain ATCC 33699 / Western)).